The sequence spans 209 residues: MSNKKRSASSSRWLQEHFSDKYVIQAQKKGLRSRAWFKLDEIQQSDKLFKPGMTVVDLGAAPGGWSQYVVTQIGGKGRVIACDLLPMDPIVGVDFLQGDFRDELVLKALLERVGDKKVQVVMCDMAPNMSGTPAVDIPKSMYLVELALDMCRDVLAPGGSFLVKVFQGDGFDEYLREIRSLFTKVKIRKPDASRARSREVYIVATGRKL.

Residues glycine 63, tryptophan 65, aspartate 83, aspartate 99, and aspartate 124 each coordinate S-adenosyl-L-methionine. Lysine 164 (proton acceptor) is an active-site residue.

Belongs to the class I-like SAM-binding methyltransferase superfamily. RNA methyltransferase RlmE family.

It is found in the cytoplasm. The catalysed reaction is uridine(2552) in 23S rRNA + S-adenosyl-L-methionine = 2'-O-methyluridine(2552) in 23S rRNA + S-adenosyl-L-homocysteine + H(+). Specifically methylates the uridine in position 2552 of 23S rRNA at the 2'-O position of the ribose in the fully assembled 50S ribosomal subunit. The polypeptide is Ribosomal RNA large subunit methyltransferase E (Yersinia enterocolitica serotype O:8 / biotype 1B (strain NCTC 13174 / 8081)).